Consider the following 204-residue polypeptide: Ras-related protein RabQ (204 aa).

GTP is bound at residue 12 to 19; sequence GPPFVGKS. The Effector region signature appears at 34 to 42; sequence MDTTIGVEF. GTP-binding positions include 60–64 and 118–121; these read DTAGQ and NKCD. S-geranylgeranyl cysteine attachment occurs at residues Cys-202 and Cys-203.

It belongs to the small GTPase superfamily. Rab family.

The protein resides in the cell membrane. In Dictyostelium discoideum (Social amoeba), this protein is Ras-related protein RabQ (rabQ).